The primary structure comprises 164 residues: Ribosome-binding factor A (164 aa).

It belongs to the RbfA family. In terms of assembly, monomer. Binds 30S ribosomal subunits, but not 50S ribosomal subunits or 70S ribosomes.

The protein localises to the cytoplasm. Functionally, one of several proteins that assist in the late maturation steps of the functional core of the 30S ribosomal subunit. Associates with free 30S ribosomal subunits (but not with 30S subunits that are part of 70S ribosomes or polysomes). Required for efficient processing of 16S rRNA. May interact with the 5'-terminal helix region of 16S rRNA. The chain is Ribosome-binding factor A from Mycobacterium leprae (strain Br4923).